A 292-amino-acid polypeptide reads, in one-letter code: Nitrogenase iron protein 2 (292 aa).

8–15 (GKGGIGKS) provides a ligand contact to ATP. Residue cysteine 106 participates in [4Fe-4S] cluster binding. At arginine 109 the chain carries ADP-ribosylarginine; by dinitrogenase reductase ADP-ribosyltransferase. Cysteine 142 contacts [4Fe-4S] cluster.

It belongs to the NifH/BchL/ChlL family. Homodimer. [4Fe-4S] cluster serves as cofactor. Post-translationally, the reversible ADP-ribosylation of Arg-109 inactivates the nitrogenase reductase and regulates nitrogenase activity.

The catalysed reaction is N2 + 8 reduced [2Fe-2S]-[ferredoxin] + 16 ATP + 16 H2O = H2 + 8 oxidized [2Fe-2S]-[ferredoxin] + 2 NH4(+) + 16 ADP + 16 phosphate + 6 H(+). The key enzymatic reactions in nitrogen fixation are catalyzed by the nitrogenase complex, which has 2 components: the iron protein and the molybdenum-iron protein. The chain is Nitrogenase iron protein 2 (nifH2) from Methanothermococcus thermolithotrophicus (Methanococcus thermolithotrophicus).